Here is a 310-residue protein sequence, read N- to C-terminus: Nucleotide-binding protein BLA_1368 (310 aa).

A disordered region spans residues 1–21 (MQSARNEQRGTGPESPHAASP). Residue 32–39 (GMSGAGRS) coordinates ATP. 83-86 (DVRS) contacts GTP.

This sequence belongs to the RapZ-like family.

Functionally, displays ATPase and GTPase activities. This chain is Nucleotide-binding protein BLA_1368, found in Bifidobacterium animalis subsp. lactis (strain AD011).